The chain runs to 236 residues: MSYNFTDPYEIARFIKEVKKSTPVKVYLKGNLEGVELGSIECYGNNDFYVLFGESDEVATFLTENKDKIVSFRLENDRRNSAIPMLELLNINARIEPGAIIRDRVSIGDNAVIMMGAVINIGAEIGESTMVDMNAVIGARGKLGKRVHLGAGAVVAGVLEPPSKTPCIIEDDVLIGANAVILEGVKIGKGSVVAAGSVVVEDVPAGVVVAGTPAKIIKSVDEKTKDKTEILDDLRK.

This sequence belongs to the transferase hexapeptide repeat family. DapH subfamily.

The catalysed reaction is (S)-2,3,4,5-tetrahydrodipicolinate + acetyl-CoA + H2O = L-2-acetamido-6-oxoheptanedioate + CoA. Its pathway is amino-acid biosynthesis; L-lysine biosynthesis via DAP pathway; LL-2,6-diaminopimelate from (S)-tetrahydrodipicolinate (acetylase route): step 1/3. Its function is as follows. Catalyzes the transfer of an acetyl group from acetyl-CoA to tetrahydrodipicolinate. The chain is 2,3,4,5-tetrahydropyridine-2,6-dicarboxylate N-acetyltransferase from Clostridium perfringens (strain SM101 / Type A).